The primary structure comprises 196 residues: Small ribosomal subunit protein uS5 (196 aa).

The 64-residue stretch at 17-80 (FEEKMLFVNR…AVARKNMITV (64 aa)) folds into the S5 DRBM domain. Residues 164-196 (GTEVRPSLSSDSPAGRSATTEAGEGVADTGGMQ) form a disordered region. Polar residues predominate over residues 170–183 (SLSSDSPAGRSATT).

Belongs to the universal ribosomal protein uS5 family. In terms of assembly, part of the 30S ribosomal subunit. Contacts proteins S4 and S8.

Functionally, with S4 and S12 plays an important role in translational accuracy. Its function is as follows. Located at the back of the 30S subunit body where it stabilizes the conformation of the head with respect to the body. The sequence is that of Small ribosomal subunit protein uS5 from Deinococcus radiodurans (strain ATCC 13939 / DSM 20539 / JCM 16871 / CCUG 27074 / LMG 4051 / NBRC 15346 / NCIMB 9279 / VKM B-1422 / R1).